Consider the following 152-residue polypeptide: UPF0225 protein Ent638_2310 (152 aa).

It belongs to the UPF0225 family.

This is UPF0225 protein Ent638_2310 from Enterobacter sp. (strain 638).